We begin with the raw amino-acid sequence, 131 residues long: Holo-[acyl-carrier-protein] synthase (131 aa).

Positions 9 and 58 each coordinate Mg(2+).

This sequence belongs to the P-Pant transferase superfamily. AcpS family. The cofactor is Mg(2+).

Its subcellular location is the cytoplasm. It carries out the reaction apo-[ACP] + CoA = holo-[ACP] + adenosine 3',5'-bisphosphate + H(+). In terms of biological role, transfers the 4'-phosphopantetheine moiety from coenzyme A to a Ser of acyl-carrier-protein. The chain is Holo-[acyl-carrier-protein] synthase from Salmonella arizonae (strain ATCC BAA-731 / CDC346-86 / RSK2980).